A 388-amino-acid polypeptide reads, in one-letter code: Succinate--CoA ligase [ADP-forming] subunit beta (388 aa).

Positions 9–244 constitute an ATP-grasp domain; the sequence is KQLFAEYGLP…PSQDDAREAH (236 aa). ATP-binding positions include Lys46, 53–55, Glu99, Thr102, and Glu107; that span reads GRG. Residues Asn199 and Asp213 each coordinate Mg(2+). Residues Asn264 and 321 to 323 each bind substrate; that span reads GIV.

Belongs to the succinate/malate CoA ligase beta subunit family. In terms of assembly, heterotetramer of two alpha and two beta subunits. Mg(2+) is required as a cofactor.

The enzyme catalyses succinate + ATP + CoA = succinyl-CoA + ADP + phosphate. The catalysed reaction is GTP + succinate + CoA = succinyl-CoA + GDP + phosphate. Its pathway is carbohydrate metabolism; tricarboxylic acid cycle; succinate from succinyl-CoA (ligase route): step 1/1. In terms of biological role, succinyl-CoA synthetase functions in the citric acid cycle (TCA), coupling the hydrolysis of succinyl-CoA to the synthesis of either ATP or GTP and thus represents the only step of substrate-level phosphorylation in the TCA. The beta subunit provides nucleotide specificity of the enzyme and binds the substrate succinate, while the binding sites for coenzyme A and phosphate are found in the alpha subunit. This is Succinate--CoA ligase [ADP-forming] subunit beta from Pseudomonas entomophila (strain L48).